Reading from the N-terminus, the 366-residue chain is Ribosome-binding ATPase YchF (366 aa).

The region spanning 3–259 is the OBG-type G domain; that stretch reads LTAGIVGLPN…LEGEEKQMFL (257 aa). Residue 12 to 17 coordinates ATP; sequence NVGKST. Mg(2+)-binding residues include S16 and T36. The region spanning 281–364 is the TGS domain; sequence GLATYFTAGE…QDGDVIHFRF (84 aa).

Belongs to the TRAFAC class OBG-HflX-like GTPase superfamily. OBG GTPase family. YchF/OLA1 subfamily. Mg(2+) is required as a cofactor.

Its function is as follows. ATPase that binds to both the 70S ribosome and the 50S ribosomal subunit in a nucleotide-independent manner. The chain is Ribosome-binding ATPase YchF from Bacillus subtilis (strain 168).